A 229-amino-acid chain; its full sequence is Ribonuclease 3 (229 aa).

Residues 5 to 127 (LSRLERKLGH…LIGAIYLDAG (123 aa)) enclose the RNase III domain. Glu-40 lines the Mg(2+) pocket. Asp-44 is an active-site residue. 2 residues coordinate Mg(2+): Asp-113 and Glu-116. Glu-116 is an active-site residue. One can recognise a DRBM domain in the interval 154-224 (DPKTRLQEFL…AAAALIALGV (71 aa)).

It belongs to the ribonuclease III family. In terms of assembly, homodimer. It depends on Mg(2+) as a cofactor.

It localises to the cytoplasm. It catalyses the reaction Endonucleolytic cleavage to 5'-phosphomonoester.. Digests double-stranded RNA. Involved in the processing of primary rRNA transcript to yield the immediate precursors to the large and small rRNAs (23S and 16S). Processes some mRNAs, and tRNAs when they are encoded in the rRNA operon. Processes pre-crRNA and tracrRNA of type II CRISPR loci if present in the organism. This is Ribonuclease 3 from Ectopseudomonas mendocina (strain ymp) (Pseudomonas mendocina).